Consider the following 549-residue polypeptide: Cation/acetate symporter ActP (549 aa).

The next 13 membrane-spanning stretches (helical) occupy residues 33 to 53 (WQAI…TYWA), 77 to 97 (LAIA…ALVF), 103 to 123 (GLIY…LIAE), 148 to 168 (ILSA…QMVG), 183 to 203 (IAVV…GMLA), 206 to 226 (WVQI…AFMV), 262 to 282 (ISAL…PHIL), 303 to 323 (GFMG…IMLV), 355 to 375 (LFLG…VAGL), 404 to 424 (VSKI…VLFE), 428 to 448 (IAFM…PIIL), 464 to 484 (GGWL…TIWV), and 493 to 513 (IFPY…GIWF).

The protein belongs to the sodium:solute symporter (SSF) (TC 2.A.21) family.

The protein resides in the cell inner membrane. Its function is as follows. Transports acetate. In Escherichia coli O8 (strain IAI1), this protein is Cation/acetate symporter ActP.